The sequence spans 252 residues: MFHLITIEDKVRIAPSQFNNEVQTIEDEIEKKYTSKVVLNAGLFVALYDILGTGDSYVHSGDGGAHLMVRFRMVVFKPFKGEVLEGVIKKSSRQSIQISLGFFHEIYLNPIELPNPSNYNQEEGLWYWEWNENQLFFEDGGRVRFKIDQVEFNPEISQPAPSPKNVNTEAMDSYSLREYKEKQIENENLLKQVKSPLILKVSMREAGLGMVSWWTNQSAGDDDENEEDGGENQDDEVAEDDGGEEPTIEEDE.

The tract at residues tryptophan 214–glutamate 252 is disordered. The segment covering glycine 220–glutamate 252 has biased composition (acidic residues).

It belongs to the eukaryotic RPB7/RPC8 RNA polymerase subunit family. As to quaternary structure, component of the RNA polymerase III (Pol III) complex consisting of several subunits.

The protein resides in the nucleus. In terms of biological role, DNA-dependent RNA polymerase catalyzes the transcription of DNA into RNA using the four ribonucleoside triphosphates as substrates. The sequence is that of DNA-directed RNA polymerase III subunit rpc8 (polr3h-1) from Dictyostelium discoideum (Social amoeba).